Reading from the N-terminus, the 145-residue chain is Large ribosomal subunit protein uL11 (145 aa).

The protein belongs to the universal ribosomal protein uL11 family. In terms of assembly, part of the ribosomal stalk of the 50S ribosomal subunit. Interacts with L10 and the large rRNA to form the base of the stalk. L10 forms an elongated spine to which L12 dimers bind in a sequential fashion forming a multimeric L10(L12)X complex. Post-translationally, one or more lysine residues are methylated.

Its function is as follows. Forms part of the ribosomal stalk which helps the ribosome interact with GTP-bound translation factors. In Rickettsia massiliae (strain Mtu5), this protein is Large ribosomal subunit protein uL11.